The following is a 184-amino-acid chain: MNLSSLRPAKGSVRNKKRVGRGQGSGNGTTAGKGNKGQQARSGYKRPIIEGGQVPVYRRLPKFGFTSRSRKTITTINLLQIEQWLEQGVVSNELTVQDFKTLLHASNTDYFKVLGAGEVTQPITITAHFFSKSAEEKIAAAGGKTIIAFRTLAEAVNIKGLPIEEALLKEKVKLVKVKKAKPTA.

The tract at residues Met1 to Lys45 is disordered. The span at Arg21 to Asn35 shows a compositional bias: gly residues.

This sequence belongs to the universal ribosomal protein uL15 family. As to quaternary structure, part of the 50S ribosomal subunit.

In terms of biological role, binds to the 23S rRNA. This chain is Large ribosomal subunit protein uL15, found in Chlorobium chlorochromatii (strain CaD3).